The following is a 374-amino-acid chain: DNA integrity scanning protein DisA (374 aa).

Residues 20 to 158 form the DAC domain; sequence DGLMRASLSA…DGQRRVLEDS (139 aa). Residues Gly87, Leu105, and 118–122 contribute to the ATP site; that span reads TRHRT.

It belongs to the DisA family. Homooctamer. Interacts with RadA. Requires Mg(2+) as cofactor.

It catalyses the reaction 2 ATP = 3',3'-c-di-AMP + 2 diphosphate. Its activity is regulated as follows. Diadenylate cyclase activity is inhibited by the interaction with RadA. Its function is as follows. Participates in a DNA-damage check-point that is active prior to asymmetric division when DNA is damaged. DisA forms globular foci that rapidly scan along the chromosomes during sporulation, searching for lesions. When a lesion is present, DisA pauses at the lesion site. This triggers a cellular response that culminates in a temporary block in sporulation initiation. In terms of biological role, also has diadenylate cyclase activity, catalyzing the condensation of 2 ATP molecules into cyclic di-AMP (c-di-AMP). c-di-AMP acts as a signaling molecule that couples DNA integrity with progression of sporulation. The rise in c-di-AMP level generated by DisA while scanning the chromosome, operates as a positive signal that advances sporulation; upon encountering a lesion, the DisA focus arrests at the damaged site and halts c-di-AMP synthesis. The chain is DNA integrity scanning protein DisA from Streptomyces coelicolor (strain ATCC BAA-471 / A3(2) / M145).